An 89-amino-acid polypeptide reads, in one-letter code: Putative regulatory protein PCC8801_0196 (89 aa).

It belongs to the RemA family.

The polypeptide is Putative regulatory protein PCC8801_0196 (Rippkaea orientalis (strain PCC 8801 / RF-1) (Cyanothece sp. (strain PCC 8801))).